The sequence spans 314 residues: Ribosomal RNA large subunit methyltransferase F (314 aa).

It belongs to the methyltransferase superfamily. METTL16/RlmF family.

The protein localises to the cytoplasm. The catalysed reaction is adenosine(1618) in 23S rRNA + S-adenosyl-L-methionine = N(6)-methyladenosine(1618) in 23S rRNA + S-adenosyl-L-homocysteine + H(+). Its function is as follows. Specifically methylates the adenine in position 1618 of 23S rRNA. The sequence is that of Ribosomal RNA large subunit methyltransferase F from Flavobacterium psychrophilum (strain ATCC 49511 / DSM 21280 / CIP 103535 / JIP02/86).